A 555-amino-acid chain; its full sequence is La-related protein 7 (555 aa).

The HTH La-type RNA-binding domain occupies 36–127; that stretch reads RSRVKQLLSD…RRKEPLGETP (92 aa). In terms of domain architecture, RRM spans 133 to 211; the sequence is RTVYVELLPK…PRKPGIFPKT (79 aa). Positions 218-327 are disordered; it reads PFDAVTQDND…ENKDEELNSL (110 aa). Composition is skewed to polar residues over residues 238–251, 258–274, and 284–293; these read KNST…NNMD, STVT…STVS, and SQSFEASSGE. Positions 295 to 356 form a coiled coil; the sequence is QFEMSSKMRK…ERLKVGEEVI (62 aa). Basic and acidic residues predominate over residues 303 to 327; the sequence is RKVEEEKSELKDLSSENKDEELNSL. The region spanning 425–538 is the xRRM domain; that stretch reads EFLSGVIVKI…TEKLISKAEK (114 aa).

The protein belongs to the LARP7 family. Core component of the 7SK RNP complex. Associates with box C/D small nucleolar ribonucleoprotein (snoRNP) complexes.

The protein localises to the nucleus. The protein resides in the nucleoplasm. RNA-binding protein that specifically binds distinct small nuclear RNA (snRNAs) and regulates their processing and function. Specifically binds the 7SK snRNA (7SK RNA) and acts as a core component of the 7SK ribonucleoprotein (RNP) complex, thereby acting as a negative regulator of transcription elongation by RNA polymerase II. The 7SK RNP complex sequesters the positive transcription elongation factor b (P-TEFb) in a large inactive 7SK RNP complex preventing RNA polymerase II phosphorylation and subsequent transcriptional elongation. The 7SK RNP complex also promotes snRNA gene transcription by RNA polymerase II via interaction with the little elongation complex (LEC). LARP7 specifically binds to the highly conserved 3'-terminal U-rich stretch of 7SK RNA; on stimulation, remains associated with 7SK RNA, whereas P-TEFb is released from the complex. LARP7 also acts as a regulator of mRNA splicing fidelity by promoting U6 snRNA processing. Specifically binds U6 snRNAs and associates with a subset of box C/D RNP complexes: promotes U6 snRNA 2'-O-methylation by facilitating U6 snRNA loading into box C/D RNP complexes. U6 snRNA 2'-O-methylation is required for mRNA splicing fidelity. The chain is La-related protein 7 from Danio rerio (Zebrafish).